The chain runs to 566 residues: Bicarbonate transporter BicA (566 aa).

Topologically, residues 1–15 are cytoplasmic; the sequence is MQITNKIHFRNIRGD. Residues 16–36 form a helical membrane-spanning segment; the sequence is IFGGLTAAVIALPMALAFGVA. The Periplasmic segment spans residues 37–42; sequence SGAGAE. A helical transmembrane segment spans residues 43–63; it reads AGLWGAVLVGFFAALFGGTPT. Leucine 64 is a topological domain (cytoplasmic). The chain crosses the membrane as a helical span at residues 65-85; the sequence is ISEPTGPMTVVMTAVIAHFTA. Threonine 69 serves as a coordination point for hydrogencarbonate. Over 86–93 the chain is Periplasmic; sequence SAATPEEG. Residues 94-114 traverse the membrane as a helical segment; the sequence is LAIAFTVVMMAGVFQIIFGSL. Over 115 to 126 the chain is Cytoplasmic; the sequence is KLGKYVTMMPYT. A helical transmembrane segment spans residues 127–147; sequence VISGFMSGIGIILVILQLAPF. At 148 to 169 the chain is on the periplasmic side; sequence LGQASPGGGVIGTLQNLPTLLS. The helical transmembrane segment at 170–190 threads the bilayer; the sequence is NIQPGETALALGTVAIIWFMP. The Cytoplasmic portion of the chain corresponds to 191-196; it reads EKFKKV. Residues 197–217 form a helical membrane-spanning segment; that stretch reads IPPQLVALVLGTVIAFFVFPP. The Periplasmic segment spans residues 218 to 247; it reads EVSDLRRIGEIRAGFPELVRPSFSPVEFQR. Residues 248–268 traverse the membrane as a helical segment; the sequence is MILDAAVLGMLGCIDALLTSV. Aspartate 262, threonine 266, and glycine 304 together coordinate Na(+). Topologically, residues 269-318 are cytoplasmic; the sequence is VADSLTRTEHNSNKELIGQGLGNLFSGLFGGIAGAGATMGTVVNIQSGGR. Residue alanine 305 participates in hydrogencarbonate binding. Threonine 306 is a binding site for Na(+). A helical membrane pass occupies residues 319 to 339; the sequence is TALSGLVRAFVLLVVILGAAS. A topological domain (periplasmic) is located at residue leucine 340. Residues 341 to 361 form a helical membrane-spanning segment; the sequence is TATIPLAVLAGIAFKVGVDII. The Cytoplasmic portion of the chain corresponds to 362-371; sequence DWSFLKRAHE. A helical transmembrane segment spans residues 372–392; the sequence is ISPKGALIMYGVILLTVLVDL. Position 393 (isoleucine 393) is a topological domain, periplasmic. Residues 394-414 traverse the membrane as a helical segment; the sequence is VAVGVGVFVANVLTIERMSNL. Over 415-566 the chain is Cytoplasmic; that stretch reads QSEKVQTVSD…GVTAPSSEMG (152 aa). Residues 436-546 form the STAS domain; sequence KRWLDEGQGR…MSREEALKNA (111 aa).

The protein belongs to the SLC26A/SulP transporter (TC 2.A.53) family.

The protein resides in the cell inner membrane. Functionally, low/medium affinity, Na(+)-dependent bicarbonate transporter. The sequence is that of Bicarbonate transporter BicA (bicA) from Picosynechococcus sp. (strain ATCC 27264 / PCC 7002 / PR-6) (Agmenellum quadruplicatum).